A 131-amino-acid chain; its full sequence is Large-conductance mechanosensitive channel (131 aa).

A run of 3 helical transmembrane segments spans residues 8–28, 30–50, and 67–87; these read FAIR…GAFG, IVSS…LGGI, and GAFI…FLFV.

The protein belongs to the MscL family. As to quaternary structure, homopentamer.

It localises to the cell membrane. In terms of biological role, channel that opens in response to stretch forces in the membrane lipid bilayer. May participate in the regulation of osmotic pressure changes within the cell. This Geobacillus kaustophilus (strain HTA426) protein is Large-conductance mechanosensitive channel.